Here is a 531-residue protein sequence, read N- to C-terminus: uncharacterized protein (531 aa).

The signal sequence occupies residues 1–28 (MNTKGIIAKLTAGALIANLLICPANTLA). SLH domains follow at residues 29 to 85 (EKKT…QINK), 86 to 149 (QAKP…IGDL), and 150 to 210 (PTQF…SKRM). In terms of domain architecture, MurNAc-LAA spans 335–517 (IIIDPGHGGI…AAEAIYAGIL (183 aa)).

In the C-terminal section; belongs to the N-acetylmuramoyl-L-alanine amidase 3 family.

Its subcellular location is the secreted. The protein resides in the cell wall. It localises to the S-layer. This is an uncharacterized protein from Bacillus anthracis.